The following is a 159-amino-acid chain: ATP synthase subunit b 2 (159 aa).

The helical transmembrane segment at 1 to 21 (MDATFWAFIALVIFVAIVVYM) threads the bilayer.

The protein belongs to the ATPase B chain family. F-type ATPases have 2 components, F(1) - the catalytic core - and F(0) - the membrane proton channel. F(1) has five subunits: alpha(3), beta(3), gamma(1), delta(1), epsilon(1). F(0) has three main subunits: a(1), b(2) and c(10-14). The alpha and beta chains form an alternating ring which encloses part of the gamma chain. F(1) is attached to F(0) by a central stalk formed by the gamma and epsilon chains, while a peripheral stalk is formed by the delta and b chains.

Its subcellular location is the cell inner membrane. Its function is as follows. F(1)F(0) ATP synthase produces ATP from ADP in the presence of a proton or sodium gradient. F-type ATPases consist of two structural domains, F(1) containing the extramembraneous catalytic core and F(0) containing the membrane proton channel, linked together by a central stalk and a peripheral stalk. During catalysis, ATP synthesis in the catalytic domain of F(1) is coupled via a rotary mechanism of the central stalk subunits to proton translocation. Component of the F(0) channel, it forms part of the peripheral stalk, linking F(1) to F(0). The protein is ATP synthase subunit b 2 of Brucella suis (strain ATCC 23445 / NCTC 10510).